Reading from the N-terminus, the 790-residue chain is Eukaryotic translation initiation factor 3 subunit C (790 aa).

The disordered stretch occupies residues 1–62 (MSRFFVSGYN…DGRPSGPAYF (62 aa)). Residues 14–53 (SSEEEDLLSSEEELLTSSGEENEDSDFFNDDDESSSDEED) are compositionally biased toward acidic residues. Residues 556 to 728 (FHQHINLELL…IVFTTDSQRS (173 aa)) enclose the PCI domain. The interval 748 to 790 (NEKTSSNGYAKKNQSQTQPQAQSKEVEENKFRYANVNTNTDEF) is disordered. Polar residues predominate over residues 751–770 (TSSNGYAKKNQSQTQPQAQS).

The protein belongs to the eIF-3 subunit C family. In terms of assembly, component of the eukaryotic translation initiation factor 3 (eIF-3) complex.

The protein localises to the cytoplasm. In terms of biological role, component of the eukaryotic translation initiation factor 3 (eIF-3) complex, which is involved in protein synthesis of a specialized repertoire of mRNAs and, together with other initiation factors, stimulates binding of mRNA and methionyl-tRNAi to the 40S ribosome. The eIF-3 complex specifically targets and initiates translation of a subset of mRNAs involved in cell proliferation. In Lodderomyces elongisporus (strain ATCC 11503 / CBS 2605 / JCM 1781 / NBRC 1676 / NRRL YB-4239) (Yeast), this protein is Eukaryotic translation initiation factor 3 subunit C.